The sequence spans 211 residues: Ubiquitin-conjugating enzyme E2 S (211 aa).

Residues 11–157 (HIIRQVYKEV…ARLMTEIHAQ (147 aa)) form the UBC core domain. Catalysis depends on Cys95, which acts as the Glycyl thioester intermediate. Residues 157-211 (QGSSLRGKDPTDPCSSASATLVSGDGPMAKKHAGDRDKKLAAKKKTDKKRALRRL) form a disordered region. Residues 197 to 211 (AAKKKTDKKRALRRL) are compositionally biased toward basic residues.

It belongs to the ubiquitin-conjugating enzyme family.

The enzyme catalyses S-ubiquitinyl-[E1 ubiquitin-activating enzyme]-L-cysteine + [E2 ubiquitin-conjugating enzyme]-L-cysteine = [E1 ubiquitin-activating enzyme]-L-cysteine + S-ubiquitinyl-[E2 ubiquitin-conjugating enzyme]-L-cysteine.. It participates in protein modification; protein ubiquitination. Its function is as follows. Catalyzes the covalent attachment of ubiquitin to other proteins. Acts as an essential factor of the anaphase promoting complex/cyclosome (APC/C), a cell cycle-regulated ubiquitin ligase that controls progression through mitosis. Acts by specifically elongating 'Lys-11'-linked polyubiquitin chains initiated by the E2 enzyme ube2c/ubch10 on APC/C substrates, enhancing the degradation of APC/C substrates by the proteasome and promoting mitotic exit. The protein is Ubiquitin-conjugating enzyme E2 S (ube2s) of Xenopus tropicalis (Western clawed frog).